The primary structure comprises 689 residues: Glycine--tRNA ligase beta subunit (689 aa).

This sequence belongs to the class-II aminoacyl-tRNA synthetase family. In terms of assembly, tetramer of two alpha and two beta subunits.

It is found in the cytoplasm. The enzyme catalyses tRNA(Gly) + glycine + ATP = glycyl-tRNA(Gly) + AMP + diphosphate. This Coxiella burnetii (strain RSA 331 / Henzerling II) protein is Glycine--tRNA ligase beta subunit.